The following is an 809-amino-acid chain: Eukaryotic translation initiation factor 3 subunit C (809 aa).

The disordered stretch occupies residues 1–102 (MSRFFAASYE…DSDESDEASK (102 aa)). 2 stretches are compositionally biased toward acidic residues: residues 18–30 (SEED…EEEL) and 37–59 (SEEE…DSDD). The PCI domain occupies 605 to 780 (FHEHINLDLI…SVLSIAKGAE (176 aa)).

This sequence belongs to the eIF-3 subunit C family. As to quaternary structure, component of the eukaryotic translation initiation factor 3 (eIF-3) complex.

Its subcellular location is the cytoplasm. Component of the eukaryotic translation initiation factor 3 (eIF-3) complex, which is involved in protein synthesis of a specialized repertoire of mRNAs and, together with other initiation factors, stimulates binding of mRNA and methionyl-tRNAi to the 40S ribosome. The eIF-3 complex specifically targets and initiates translation of a subset of mRNAs involved in cell proliferation. The sequence is that of Eukaryotic translation initiation factor 3 subunit C from Vanderwaltozyma polyspora (strain ATCC 22028 / DSM 70294 / BCRC 21397 / CBS 2163 / NBRC 10782 / NRRL Y-8283 / UCD 57-17) (Kluyveromyces polysporus).